A 156-amino-acid chain; its full sequence is Small ribosomal subunit protein uS7 (156 aa).

Belongs to the universal ribosomal protein uS7 family. Part of the 30S ribosomal subunit. Contacts proteins S9 and S11.

Its function is as follows. One of the primary rRNA binding proteins, it binds directly to 16S rRNA where it nucleates assembly of the head domain of the 30S subunit. Is located at the subunit interface close to the decoding center, probably blocks exit of the E-site tRNA. The sequence is that of Small ribosomal subunit protein uS7 from Pasteurella multocida (strain Pm70).